The sequence spans 807 residues: Glycerol-3-phosphate acyltransferase (807 aa).

Residues 308-313 carry the HXXXXD motif motif; that stretch reads CHRSHM.

Belongs to the GPAT/DAPAT family.

The protein localises to the cell inner membrane. It carries out the reaction sn-glycerol 3-phosphate + an acyl-CoA = a 1-acyl-sn-glycero-3-phosphate + CoA. Its pathway is phospholipid metabolism; CDP-diacylglycerol biosynthesis; CDP-diacylglycerol from sn-glycerol 3-phosphate: step 1/3. The chain is Glycerol-3-phosphate acyltransferase from Shewanella pealeana (strain ATCC 700345 / ANG-SQ1).